Consider the following 617-residue polypeptide: Dihydroxy-acid dehydratase (617 aa).

Position 81 (D81) interacts with Mg(2+). [2Fe-2S] cluster is bound at residue C122. 2 residues coordinate Mg(2+): D123 and K124. At K124 the chain carries N6-carboxylysine. [2Fe-2S] cluster is bound at residue C195. E491 contacts Mg(2+). Catalysis depends on S517, which acts as the Proton acceptor.

This sequence belongs to the IlvD/Edd family. In terms of assembly, homodimer. Requires [2Fe-2S] cluster as cofactor. Mg(2+) serves as cofactor.

It catalyses the reaction (2R)-2,3-dihydroxy-3-methylbutanoate = 3-methyl-2-oxobutanoate + H2O. The catalysed reaction is (2R,3R)-2,3-dihydroxy-3-methylpentanoate = (S)-3-methyl-2-oxopentanoate + H2O. It functions in the pathway amino-acid biosynthesis; L-isoleucine biosynthesis; L-isoleucine from 2-oxobutanoate: step 3/4. The protein operates within amino-acid biosynthesis; L-valine biosynthesis; L-valine from pyruvate: step 3/4. Its function is as follows. Functions in the biosynthesis of branched-chain amino acids. Catalyzes the dehydration of (2R,3R)-2,3-dihydroxy-3-methylpentanoate (2,3-dihydroxy-3-methylvalerate) into 2-oxo-3-methylpentanoate (2-oxo-3-methylvalerate) and of (2R)-2,3-dihydroxy-3-methylbutanoate (2,3-dihydroxyisovalerate) into 2-oxo-3-methylbutanoate (2-oxoisovalerate), the penultimate precursor to L-isoleucine and L-valine, respectively. The polypeptide is Dihydroxy-acid dehydratase (Nitrosococcus oceani (strain ATCC 19707 / BCRC 17464 / JCM 30415 / NCIMB 11848 / C-107)).